The primary structure comprises 183 residues: Ribulose bisphosphate carboxylase small subunit, chloroplastic 4 (183 aa).

A chloroplast-targeting transit peptide spans 1 to 57 (MASSLMSNAATTMAAATTTAQANMVAPFNGLKSISAFPVTRKNNDITSVASNGGRVQ).

The protein belongs to the RuBisCO small chain family. In terms of assembly, heterohexadecamer of 8 large and 8 small subunits.

The protein localises to the plastid. The protein resides in the chloroplast. In terms of biological role, ruBisCO catalyzes two reactions: the carboxylation of D-ribulose 1,5-bisphosphate, the primary event in carbon dioxide fixation, as well as the oxidative fragmentation of the pentose substrate. Both reactions occur simultaneously and in competition at the same active site. Although the small subunit is not catalytic it is essential for maximal activity. This chain is Ribulose bisphosphate carboxylase small subunit, chloroplastic 4, found in Mesembryanthemum crystallinum (Common ice plant).